Consider the following 552-residue polypeptide: Carboxypeptidase Y homolog A (552 aa).

The first 17 residues, 1–17, serve as a signal peptide directing secretion; sequence MRVLPATLLVGAATAAT. The propeptide occupies 18–133; the sequence is PAQQVLGGLQ…KLEAYDLRIK (116 aa). Cystine bridges form between Cys188/Cys428, Cys322/Cys336, Cys346/Cys369, Cys353/Cys362, and Cys391/Cys398. Residue Asn219 is glycosylated (N-linked (GlcNAc...) asparagine). Ser275 is an active-site residue. Asp467 is an active-site residue. The N-linked (GlcNAc...) asparagine glycan is linked to Asn518. The active site involves His529.

It belongs to the peptidase S10 family.

It localises to the vacuole. It catalyses the reaction Release of a C-terminal amino acid with broad specificity.. Its function is as follows. Vacuolar carboxypeptidase involved in degradation of small peptides. Digests preferentially peptides containing an aliphatic or hydrophobic residue in P1' position, as well as methionine, leucine or phenylalanine in P1 position of ester substrate. This is Carboxypeptidase Y homolog A (cpyA) from Emericella nidulans (strain FGSC A4 / ATCC 38163 / CBS 112.46 / NRRL 194 / M139) (Aspergillus nidulans).